A 163-amino-acid chain; its full sequence is 3-hydroxyacyl-[acyl-carrier-protein] dehydratase FabZ (163 aa).

The active site involves His-61.

This sequence belongs to the thioester dehydratase family. FabZ subfamily.

The protein resides in the cytoplasm. It catalyses the reaction a (3R)-hydroxyacyl-[ACP] = a (2E)-enoyl-[ACP] + H2O. Its function is as follows. Involved in unsaturated fatty acids biosynthesis. Catalyzes the dehydration of short chain beta-hydroxyacyl-ACPs and long chain saturated and unsaturated beta-hydroxyacyl-ACPs. In Dinoroseobacter shibae (strain DSM 16493 / NCIMB 14021 / DFL 12), this protein is 3-hydroxyacyl-[acyl-carrier-protein] dehydratase FabZ.